Here is a 289-residue protein sequence, read N- to C-terminus: Pantothenate synthetase (289 aa).

30 to 37 (MGYLHKGH) provides a ligand contact to ATP. Catalysis depends on His-37, which acts as the Proton donor. Gln-61 is a (R)-pantoate binding site. Gln-61 is a beta-alanine binding site. Residue 147–150 (GEKD) participates in ATP binding. Residue Gln-153 participates in (R)-pantoate binding. ATP is bound by residues Val-176 and 184–187 (CSSR).

The protein belongs to the pantothenate synthetase family. Homodimer.

It localises to the cytoplasm. It catalyses the reaction (R)-pantoate + beta-alanine + ATP = (R)-pantothenate + AMP + diphosphate + H(+). The protein operates within cofactor biosynthesis; (R)-pantothenate biosynthesis; (R)-pantothenate from (R)-pantoate and beta-alanine: step 1/1. Its function is as follows. Catalyzes the condensation of pantoate with beta-alanine in an ATP-dependent reaction via a pantoyl-adenylate intermediate. The protein is Pantothenate synthetase of Brucella anthropi (strain ATCC 49188 / DSM 6882 / CCUG 24695 / JCM 21032 / LMG 3331 / NBRC 15819 / NCTC 12168 / Alc 37) (Ochrobactrum anthropi).